Consider the following 398-residue polypeptide: Acetate kinase 1 (398 aa).

A Mg(2+)-binding site is contributed by asparagine 10. Lysine 17 serves as a coordination point for ATP. Substrate is bound at residue arginine 89. The active-site Proton donor/acceptor is aspartate 146. Residues 206 to 210 (HLGNG), 281 to 283 (DCR), and 329 to 333 (GIGEN) each bind ATP. Glutamate 384 provides a ligand contact to Mg(2+).

Belongs to the acetokinase family. As to quaternary structure, homodimer. It depends on Mg(2+) as a cofactor. Mn(2+) is required as a cofactor.

The protein localises to the cytoplasm. The catalysed reaction is acetate + ATP = acetyl phosphate + ADP. The protein operates within metabolic intermediate biosynthesis; acetyl-CoA biosynthesis; acetyl-CoA from acetate: step 1/2. Functionally, catalyzes the formation of acetyl phosphate from acetate and ATP. Can also catalyze the reverse reaction. The sequence is that of Acetate kinase 1 from Neisseria meningitidis serogroup B (strain ATCC BAA-335 / MC58).